The chain runs to 188 residues: Ion-translocating oxidoreductase complex subunit B (188 aa).

The hydrophobic stretch occupies residues 1–23; it reads MIEAAVSMSALGLGLGLLLGVAA. Residues 29–88 enclose the 4Fe-4S domain; it reads ESPPILDAIEGILPGTNCGACGYPGCRGLAEAMSEGAAPVTACAPGGRDVALALAAIVET. Residues Cys-46, Cys-49, Cys-54, Cys-71, Cys-113, Cys-116, Cys-119, Cys-123, Cys-143, Cys-146, Cys-149, and Cys-153 each coordinate [4Fe-4S] cluster. 2 4Fe-4S ferredoxin-type domains span residues 104-133 and 134-163; these read TVAFIFEDHCTGCMRCFKRCPTDAIIGANR and QIHTVVTDACIGCNACIEACPTEAIVARVK.

The protein belongs to the 4Fe4S bacterial-type ferredoxin family. RnfB subfamily. As to quaternary structure, the complex is composed of six subunits: RnfA, RnfB, RnfC, RnfD, RnfE and RnfG. The cofactor is [4Fe-4S] cluster.

The protein localises to the cellular chromatophore membrane. Its function is as follows. Part of a membrane-bound complex that couples electron transfer with translocation of ions across the membrane. The polypeptide is Ion-translocating oxidoreductase complex subunit B (Cereibacter sphaeroides (strain ATCC 17029 / ATH 2.4.9) (Rhodobacter sphaeroides)).